The primary structure comprises 342 residues: Ribosomal RNA small subunit methyltransferase H (342 aa).

Residues 42 to 44 (GGH), Asp61, Phe88, Asp119, and Gln126 each bind S-adenosyl-L-methionine.

It belongs to the methyltransferase superfamily. RsmH family.

Its subcellular location is the cytoplasm. It catalyses the reaction cytidine(1402) in 16S rRNA + S-adenosyl-L-methionine = N(4)-methylcytidine(1402) in 16S rRNA + S-adenosyl-L-homocysteine + H(+). Functionally, specifically methylates the N4 position of cytidine in position 1402 (C1402) of 16S rRNA. The polypeptide is Ribosomal RNA small subunit methyltransferase H (Corynebacterium jeikeium (strain K411)).